A 414-amino-acid polypeptide reads, in one-letter code: Probable mannose-1-phosphate guanyltransferase (414 aa).

This sequence belongs to the transferase hexapeptide repeat family.

The protein localises to the cytoplasm. It is found in the nucleus. It catalyses the reaction alpha-D-mannose 1-phosphate + GTP + H(+) = GDP-alpha-D-mannose + diphosphate. It functions in the pathway nucleotide-sugar biosynthesis; GDP-alpha-D-mannose biosynthesis; GDP-alpha-D-mannose from alpha-D-mannose 1-phosphate (GTP route): step 1/1. In terms of biological role, involved in cell wall synthesis where it is required for glycosylation. This chain is Probable mannose-1-phosphate guanyltransferase, found in Schizosaccharomyces pombe (strain 972 / ATCC 24843) (Fission yeast).